Consider the following 303-residue polypeptide: Caspase-7 (303 aa).

Methionine 1 carries the post-translational modification N-acetylmethionine. A propeptide spanning residues 1 to 23 (MTDDQDCAAELEKVDSSSEDGVD) is cleaved from the precursor. Residues 1-26 (MTDDQDCAAELEKVDSSSEDGVDAKP) are disordered. A compositionally biased stretch (basic and acidic residues) spans 10–26 (ELEKVDSSSEDGVDAKP). Phosphoserine is present on serine 30. Residues 38–41 (KKKR) are exosite. The tract at residues 76-87 (KNFDKATGMDVR) is loop L1. Histidine 144 is a catalytic residue. Threonine 173 carries the phosphothreonine modification. Cysteine 186 is a catalytic residue. The segment at 187 to 196 (RGTELDDGIQ) is loop L2. The propeptide occupies 199–206 (SGPINDID). The loop L3 stretch occupies residues 226–238 (VPGYYSWRNPGKG). Position 239 is a phosphoserine (serine 239). The loop L4 stretch occupies residues 274 to 288 (ESQSDDPRFNEKKQI).

The protein belongs to the peptidase C14A family. In terms of assembly, heterotetramer that consists of two anti-parallel arranged heterodimers, each one formed by a 20 kDa (p20) and a 11 kDa (p11) subunit. Interacts with XIAP (via its second BIR domain); inhibiting CASP7 activity. Interacts with BIRC6/bruce. Interacts with ATXN3 (short isoform 1). Interacts with HSPA5. Post-translationally, cleavage by different proteases, such as granzyme B (GZMB), caspase-1 (CASP1), caspase-8 (CASP8) or caspase-9 (CASP9) generate the two active subunits. Its involvement in different programmed cell death processes is probably specified by the protease that activates CASP7. Cleaved and activated by initiator caspases (CASP8 and/or CASP9), leading to execution phase of apoptosis. Cleavage and maturation by GZMB regulates granzyme-mediated programmed cell death. Cleaved and activated by CASP1 in response to bacterial infection. Propeptide domains can also be cleaved efficiently by CASP3. Active heterodimers between the small subunit of caspase-7 and the large subunit of CASP3, and vice versa, also occur. Also cleaved at the N-terminus at alternative sites by CAPN1, leading to its activation. In terms of processing, phosphorylation at Ser-30 and Ser-239 by PAK2 inhibits its activity. Phosphorylation at Ser-30 prevents cleavage and activation by initiator caspase CASP9, while phosphorylation at Ser-239 prevents thiol protease activity by preventing substrate-binding. Ubiquitinated by BIRC6; this activity is inhibited by DIABLO/SMAC. As to expression, highly expressed in heart, lung, liver and kidney. Low levels in spleen, skeletal muscle and testis. No expression in the brain.

It localises to the cytoplasm. It is found in the cytosol. The protein localises to the nucleus. The protein resides in the secreted. Its subcellular location is the extracellular space. The catalysed reaction is Strict requirement for an Asp residue at position P1 and has a preferred cleavage sequence of Asp-Glu-Val-Asp-|-.. Its activity is regulated as follows. During activation, the N-terminal disordered prodomain is removed by cleavage. Concomitantly, double cleavage gives rise to a large Caspase-7 subunit p20 and a small Caspase-7 subunit p11. The two large and two small subunits then assemble to form the active CASP7 complex. Can be cleaved and activated by different caspases, depending on the context. Cleaved and activated by initiator caspases (CASP8 and/or CASP9), leading to execution phase of apoptosis. Cleavage and maturation by GZMB regulates granzyme-mediated programmed cell death. Cleavage and maturation by CASP1 regulates pyroptosis. Inhibited by XIAP, which directly binds to the active site pocket and obstructs substrate entry. Phosphorylation at Ser-30 and Ser-239 by PAK2 inhibits its activity. Inhibited by BIRC6; following inhibition of BIRC6-caspase binding by DIABLO/SMAC, BIRC6 is subjected to caspase cleavage, leading to an increase in active caspases. In terms of biological role, thiol protease involved in different programmed cell death processes, such as apoptosis, pyroptosis or granzyme-mediated programmed cell death, by proteolytically cleaving target proteins. Has a marked preference for Asp-Glu-Val-Asp (DEVD) consensus sequences, with some plasticity for alternate non-canonical sequences. Its involvement in the different programmed cell death processes is probably determined by upstream proteases that activate CASP7. Acts as an effector caspase involved in the execution phase of apoptosis: following cleavage and activation by initiator caspases (CASP8 and/or CASP9), mediates execution of apoptosis by catalyzing cleavage of proteins, such as CLSPN, PARP1, PTGES3 and YY1. Compared to CASP3, acts as a minor executioner caspase and cleaves a limited set of target proteins. Acts as a key regulator of the inflammatory response in response to bacterial infection by catalyzing cleavage and activation of the sphingomyelin phosphodiesterase SMPD1 in the extracellular milieu, thereby promoting membrane repair. Regulates pyroptosis in intestinal epithelial cells: cleaved and activated by CASP1 in response to S.typhimurium infection, promoting its secretion to the extracellular milieu, where it catalyzes activation of SMPD1, generating ceramides that repair membranes and counteract the action of gasdermin-D (GSDMD) pores. Regulates granzyme-mediated programmed cell death in hepatocytes: cleaved and activated by granzyme B (GZMB) in response to bacterial infection, promoting its secretion to the extracellular milieu, where it catalyzes activation of SMPD1, generating ceramides that repair membranes and counteract the action of perforin (PRF1) pores. Following cleavage by CASP1 in response to inflammasome activation, catalyzes processing and inactivation of PARP1, alleviating the transcription repressor activity of PARP1. Acts as an inhibitor of type I interferon production during virus-induced apoptosis by mediating cleavage of antiviral proteins CGAS, IRF3 and MAVS, thereby preventing cytokine overproduction. Cleaves and activates sterol regulatory element binding proteins (SREBPs). Cleaves phospholipid scramblase proteins XKR4, XKR8 and XKR9. Cleaves BIRC6 following inhibition of BIRC6-caspase binding by DIABLO/SMAC. In Mus musculus (Mouse), this protein is Caspase-7.